Here is a 169-residue protein sequence, read N- to C-terminus: Putative phosphoesterase SAR0985 (169 aa).

His-34 acts as the Proton donor in catalysis. Short sequence motifs (HXTX) lie at residues 34–37 (HVTI) and 115–118 (HFTI). The active-site Proton acceptor is His-115.

The protein belongs to the 2H phosphoesterase superfamily. YjcG family.

The chain is Putative phosphoesterase SAR0985 from Staphylococcus aureus (strain MRSA252).